The primary structure comprises 223 residues: Germin-like protein 1-3 (223 aa).

Residues 1–22 (MAKLILATFAVVFMALAATSLA) form the signal peptide. An intrachain disulfide couples cysteine 32 to cysteine 50. Residue asparagine 55 is glycosylated (N-linked (GlcNAc...) asparagine). One can recognise a Cupin type-1 domain in the interval 64-212 (DGLMKAGNTG…AFQVDGGMVE (149 aa)). Positions 112, 114, 119, and 158 each coordinate Mn(2+).

This sequence belongs to the germin family. In terms of assembly, oligomer (believed to be a pentamer but probably hexamer).

The protein localises to the secreted. The protein resides in the extracellular space. It localises to the apoplast. In terms of biological role, may play a role in plant defense. Probably has no oxalate oxidase activity even if the active site is conserved. The chain is Germin-like protein 1-3 (GER8) from Oryza sativa subsp. japonica (Rice).